The sequence spans 96 residues: Small ribosomal subunit protein bS6 (96 aa).

It belongs to the bacterial ribosomal protein bS6 family.

Functionally, binds together with bS18 to 16S ribosomal RNA. This is Small ribosomal subunit protein bS6 from Streptococcus suis (strain 98HAH33).